Consider the following 282-residue polypeptide: F-actin-capping protein subunit alpha (282 aa).

This sequence belongs to the F-actin-capping protein alpha subunit family. Component of the F-actin capping complex, composed of a heterodimer of an alpha and a beta subunit.

It is found in the cytoplasm. The protein localises to the cytoskeleton. F-actin-capping proteins bind in a Ca(2+)-independent manner to the fast growing ends of actin filaments (barbed end) thereby blocking the exchange of subunits at these ends. Unlike other capping proteins (such as gelsolin and severin), these proteins do not sever actin filaments. This Caenorhabditis elegans protein is F-actin-capping protein subunit alpha (cap-1).